A 91-amino-acid chain; its full sequence is Small ribosomal subunit protein bS16 (91 aa).

This sequence belongs to the bacterial ribosomal protein bS16 family.

The sequence is that of Small ribosomal subunit protein bS16 from Phytoplasma australiense.